A 268-amino-acid chain; its full sequence is MSDTKVYLLDGGSLVLDGYHVFWNRGPGGEVRFPVYSILIEHAEGRFLIDTGYDYDHVMKVLPFEKPIQEKHQTIPGALGLLGLEPRDIDVVVNSHFHFDHCGGNKYFPHAKKICHRSEVPQACNPQPFEHLGYSDLSFSAEAAEARGATAQLLEGTTRANSTFEGIDGDVDLARGVKLISTPGHSIGHYSLLVEFPRRKPILFTIDAAYTQKSLETLCQAAFHIDPVAGVNSMRKVKKLAEDHGAELMYSHDMDNFKTYRTGTQFYG.

His-96, His-98, Asp-100, His-101, His-185, Asp-207, and His-252 together coordinate Zn(2+). Catalysis depends on Asp-100, which acts as the Proton donor/acceptor.

This sequence belongs to the metallo-beta-lactamase superfamily. In terms of assembly, homodimer. The cofactor is Zn(2+).

The enzyme catalyses 4-pyridoxolactone + H2O = 4-pyridoxate + H(+). Its pathway is cofactor degradation; B6 vitamer degradation; 4-pyridoxate from pyridoxal: step 2/2. Its activity is regulated as follows. Inhibited by Hg(2+). In terms of biological role, involved in the degradation of pyridoxine or pyridoxamine (free, phosphate-unbound, forms of vitamin B6). Hydrolyzes 4-pyridoxolactone to 4-pyridoxic acid. Has lower activity toward N-hexanoyl-D,L-homoserine lactone, but is not active toward 5-pyridoxolactone and gamma-butyrolactone. In Mesorhizobium japonicum (strain LMG 29417 / CECT 9101 / MAFF 303099) (Mesorhizobium loti (strain MAFF 303099)), this protein is 4-pyridoxolactonase.